Reading from the N-terminus, the 163-residue chain is MASVSEHCLNEIKPTILKCDKNKDRQYSIDEIVQLLKKNSKNPERLAVLLFKSLNKKLDESICFNDIDDREISKNCDKFQDKPEIDIESFLLRFDKNNDKMISHHELKTKLDELGCGNSKKTTDYVFEQIDTNKEGSLSYEDLEGFVKFLKQDNNKKTSLPSV.

3 EF-hand domains span residues aspartate 20–asparagine 42, lysine 82–glycine 117, and asparagine 118–aspartate 153. Positions 95, 97, 99, 101, 106, 131, 133, 135, 137, and 142 each coordinate Ca(2+).

The sequence is that of Calcium-binding protein I (cbpI) from Dictyostelium discoideum (Social amoeba).